The sequence spans 223 residues: Agamous-like MADS-box protein AGL11 (223 aa).

An MADS-box domain is found at 1 to 61; it reads MGRGKIEIKR…GRVYEYSNNN (61 aa). The K-box domain occupies 87–177; sequence AQYYQQESAK…RTKIAEVERL (91 aa).

As to expression, expressed in flowers and seeds. Expressed in endotesta cell layer of developing seeds.

It localises to the nucleus. In terms of biological role, probable transcription factor involved in seed development. Plays a role in seed morphogenesis by promoting the correct development of endotesta cell layer, which directs the further development of the seed coat, the endosperm, and consequently the embryo. The polypeptide is Agamous-like MADS-box protein AGL11 (Vitis vinifera (Grape)).